A 299-amino-acid chain; its full sequence is tRNA dimethylallyltransferase (299 aa).

An ATP-binding site is contributed by 10–17; sequence GPTAVGKT. 12 to 17 provides a ligand contact to substrate; it reads TAVGKT. The tract at residues 35–38 is interaction with substrate tRNA; sequence DSQQ.

This sequence belongs to the IPP transferase family. As to quaternary structure, monomer. It depends on Mg(2+) as a cofactor.

It catalyses the reaction adenosine(37) in tRNA + dimethylallyl diphosphate = N(6)-dimethylallyladenosine(37) in tRNA + diphosphate. In terms of biological role, catalyzes the transfer of a dimethylallyl group onto the adenine at position 37 in tRNAs that read codons beginning with uridine, leading to the formation of N6-(dimethylallyl)adenosine (i(6)A). The polypeptide is tRNA dimethylallyltransferase (Streptococcus thermophilus (strain CNRZ 1066)).